A 241-amino-acid polypeptide reads, in one-letter code: Uridylate kinase (241 aa).

12–15 contributes to the ATP binding site; sequence KVSG. The involved in allosteric activation by GTP stretch occupies residues 20–25; that stretch reads GEKGTG. Gly54 contributes to the UMP binding site. Positions 55 and 59 each coordinate ATP. UMP contacts are provided by residues Asp74 and 135 to 142; that span reads TGNPYFST. ATP-binding residues include Asn163, Tyr169, and Asp172.

It belongs to the UMP kinase family. Homohexamer.

The protein resides in the cytoplasm. The enzyme catalyses UMP + ATP = UDP + ADP. The protein operates within pyrimidine metabolism; CTP biosynthesis via de novo pathway; UDP from UMP (UMPK route): step 1/1. Its activity is regulated as follows. Allosterically activated by GTP. Inhibited by UTP. Its function is as follows. Catalyzes the reversible phosphorylation of UMP to UDP. The protein is Uridylate kinase of Lactobacillus johnsonii (strain CNCM I-12250 / La1 / NCC 533).